Here is a 34-residue protein sequence, read N- to C-terminus: RPLTQHKPHTPGDEHPHGAEPPGXDTALAQIXGD.

Residues arginine 1–aspartate 25 are disordered.

It belongs to the hemopexin family. In terms of tissue distribution, expressed by the liver and secreted in plasma.

It is found in the secreted. In terms of biological role, binds heme and transports it to the liver for breakdown and iron recovery, after which the free hemopexin returns to the circulation. The chain is Hemopexin (HPX) from Gallus gallus (Chicken).